The following is a 500-amino-acid chain: Glucose-6-phosphate isomerase (500 aa).

The active-site Proton donor is the Glu332. Catalysis depends on residues His363 and Lys473.

The protein belongs to the GPI family.

The protein resides in the cytoplasm. The enzyme catalyses alpha-D-glucose 6-phosphate = beta-D-fructose 6-phosphate. It functions in the pathway carbohydrate biosynthesis; gluconeogenesis. The protein operates within carbohydrate degradation; glycolysis; D-glyceraldehyde 3-phosphate and glycerone phosphate from D-glucose: step 2/4. Catalyzes the reversible isomerization of glucose-6-phosphate to fructose-6-phosphate. The protein is Glucose-6-phosphate isomerase of Rhizorhabdus wittichii (strain DSM 6014 / CCUG 31198 / JCM 15750 / NBRC 105917 / EY 4224 / RW1) (Sphingomonas wittichii).